The chain runs to 179 residues: Large ribosomal subunit protein uL5 (179 aa).

The protein belongs to the universal ribosomal protein uL5 family. In terms of assembly, part of the 50S ribosomal subunit; part of the 5S rRNA/L5/L18/L25 subcomplex. Contacts the 5S rRNA and the P site tRNA. Forms a bridge to the 30S subunit in the 70S ribosome.

In terms of biological role, this is one of the proteins that bind and probably mediate the attachment of the 5S RNA into the large ribosomal subunit, where it forms part of the central protuberance. In the 70S ribosome it contacts protein S13 of the 30S subunit (bridge B1b), connecting the 2 subunits; this bridge is implicated in subunit movement. Contacts the P site tRNA; the 5S rRNA and some of its associated proteins might help stabilize positioning of ribosome-bound tRNAs. This chain is Large ribosomal subunit protein uL5, found in Prochlorococcus marinus (strain NATL1A).